A 796-amino-acid polypeptide reads, in one-letter code: U-box domain-containing protein 51 (796 aa).

3 disordered regions span residues D163 to Q195, T218 to V240, and R270 to Q292. Residues A171–S181 are compositionally biased toward basic and acidic residues. Positions D182 to Q195 are enriched in low complexity. Residues R270–S291 show a composition bias toward low complexity. The stretch at E298–G407 forms a coiled coil. Residues F429 to L700 form the Protein kinase domain. ATP is bound by residues I435 to V443 and K456. Residue D557 is the Proton acceptor of the active site. Positions N724–K796 constitute a U-box domain.

The protein belongs to the protein kinase superfamily. Ser/Thr protein kinase family.

It catalyses the reaction L-seryl-[protein] + ATP = O-phospho-L-seryl-[protein] + ADP + H(+). It carries out the reaction L-threonyl-[protein] + ATP = O-phospho-L-threonyl-[protein] + ADP + H(+). The enzyme catalyses S-ubiquitinyl-[E2 ubiquitin-conjugating enzyme]-L-cysteine + [acceptor protein]-L-lysine = [E2 ubiquitin-conjugating enzyme]-L-cysteine + N(6)-ubiquitinyl-[acceptor protein]-L-lysine.. It functions in the pathway protein modification; protein ubiquitination. Functions as an E3 ubiquitin ligase. The protein is U-box domain-containing protein 51 (PUB51) of Arabidopsis thaliana (Mouse-ear cress).